The primary structure comprises 272 residues: Ribonuclease HII (272 aa).

The RNase H type-2 domain maps to 30–221 (GPVAGVDEVG…VRRAAEATGV (192 aa)). The a divalent metal cation site is built by Asp-36, Glu-37, and Asp-130.

It belongs to the RNase HII family. Mn(2+) is required as a cofactor. The cofactor is Mg(2+).

It is found in the cytoplasm. It carries out the reaction Endonucleolytic cleavage to 5'-phosphomonoester.. Functionally, endonuclease that specifically degrades the RNA of RNA-DNA hybrids. This is Ribonuclease HII from Mycolicibacterium smegmatis (strain ATCC 700084 / mc(2)155) (Mycobacterium smegmatis).